Here is a 211-residue protein sequence, read N- to C-terminus: Thymidylate kinase (211 aa).

ATP is bound at residue 7-14 (GCEGSGKS).

The protein belongs to the thymidylate kinase family.

The catalysed reaction is dTMP + ATP = dTDP + ADP. Phosphorylation of dTMP to form dTDP in both de novo and salvage pathways of dTTP synthesis. This is Thymidylate kinase from Chlamydia abortus (strain DSM 27085 / S26/3) (Chlamydophila abortus).